A 1015-amino-acid chain; its full sequence is Putative helicase mov-10-B.2 (1015 aa).

Positions 94–130 (QWFRPRRRQQNQANATPGNVSSVTPSSDQGPSCPESG) are disordered. The span at 109 to 123 (TPGNVSSVTPSSDQG) shows a compositional bias: polar residues. Position 555-562 (555-562 (GPPGTGKT)) interacts with ATP. Residues 677-680 (DEAG) carry the DEAG box motif.

It belongs to the DNA2/NAM7 helicase family. SDE3 subfamily.

Its subcellular location is the cytoplasm. It localises to the P-body. It catalyses the reaction ATP + H2O = ADP + phosphate + H(+). In terms of biological role, probable RNA helicase. Required for RNA-mediated gene silencing by the RNA-induced silencing complex (RISC). Required for both miRNA-mediated translational repression and miRNA-mediated cleavage of complementary mRNAs by RISC. In Danio rerio (Zebrafish), this protein is Putative helicase mov-10-B.2 (mov10b.2).